We begin with the raw amino-acid sequence, 463 residues long: L-seryl-tRNA(Sec) selenium transferase (463 aa).

At K294 the chain carries N6-(pyridoxal phosphate)lysine.

This sequence belongs to the SelA family. Requires pyridoxal 5'-phosphate as cofactor.

Its subcellular location is the cytoplasm. It carries out the reaction L-seryl-tRNA(Sec) + selenophosphate + H(+) = L-selenocysteinyl-tRNA(Sec) + phosphate. Its pathway is aminoacyl-tRNA biosynthesis; selenocysteinyl-tRNA(Sec) biosynthesis; selenocysteinyl-tRNA(Sec) from L-seryl-tRNA(Sec) (bacterial route): step 1/1. Functionally, converts seryl-tRNA(Sec) to selenocysteinyl-tRNA(Sec) required for selenoprotein biosynthesis. The polypeptide is L-seryl-tRNA(Sec) selenium transferase (Hyphomonas neptunium (strain ATCC 15444)).